We begin with the raw amino-acid sequence, 371 residues long: Carbamoyl phosphate synthase small chain (371 aa).

The tract at residues 1–190 (MRKTAILALE…LYRENEKPLV (190 aa)) is CPSase. Positions 47, 237, and 239 each coordinate L-glutamine. The Glutamine amidotransferase type-1 domain occupies 189-371 (LVAVIDFGVK…FKEFVKMAQG (183 aa)). Cys264 acts as the Nucleophile in catalysis. Residues Leu265, Gln268, Asn306, and Phe309 each coordinate L-glutamine. Catalysis depends on residues His348 and Glu350.

The protein belongs to the CarA family. As to quaternary structure, composed of two chains; the small (or glutamine) chain promotes the hydrolysis of glutamine to ammonia, which is used by the large (or ammonia) chain to synthesize carbamoyl phosphate. Tetramer of heterodimers (alpha,beta)4.

The catalysed reaction is hydrogencarbonate + L-glutamine + 2 ATP + H2O = carbamoyl phosphate + L-glutamate + 2 ADP + phosphate + 2 H(+). The enzyme catalyses L-glutamine + H2O = L-glutamate + NH4(+). It functions in the pathway amino-acid biosynthesis; L-arginine biosynthesis; carbamoyl phosphate from bicarbonate: step 1/1. It participates in pyrimidine metabolism; UMP biosynthesis via de novo pathway; (S)-dihydroorotate from bicarbonate: step 1/3. Its function is as follows. Small subunit of the glutamine-dependent carbamoyl phosphate synthetase (CPSase). CPSase catalyzes the formation of carbamoyl phosphate from the ammonia moiety of glutamine, carbonate, and phosphate donated by ATP, constituting the first step of 2 biosynthetic pathways, one leading to arginine and/or urea and the other to pyrimidine nucleotides. The small subunit (glutamine amidotransferase) binds and cleaves glutamine to supply the large subunit with the substrate ammonia. This chain is Carbamoyl phosphate synthase small chain, found in Aquifex aeolicus (strain VF5).